A 215-amino-acid polypeptide reads, in one-letter code: Pyrophosphatase PpaX (215 aa).

The active-site Nucleophile is the aspartate 9.

The protein belongs to the HAD-like hydrolase superfamily. PpaX family. It depends on Mg(2+) as a cofactor.

It catalyses the reaction diphosphate + H2O = 2 phosphate + H(+). In terms of biological role, hydrolyzes pyrophosphate formed during P-Ser-HPr dephosphorylation by HPrK/P. Might play a role in controlling the intracellular pyrophosphate pool. This is Pyrophosphatase PpaX from Anoxybacillus flavithermus (strain DSM 21510 / WK1).